The primary structure comprises 383 residues: tRNA-specific 2-thiouridylase MnmA (383 aa).

Residues 9–16 (GMSGGVDS) and M35 contribute to the ATP site. An interaction with target base in tRNA region spans residues 95–97 (NPD). C100 serves as the catalytic Nucleophile. C100 and C196 are disulfide-bonded. G124 is a binding site for ATP. Positions 146–148 (KDQ) are interaction with tRNA. C196 acts as the Cysteine persulfide intermediate in catalysis. The interaction with tRNA stretch occupies residues 308–309 (RY).

Belongs to the MnmA/TRMU family.

The protein localises to the cytoplasm. It catalyses the reaction S-sulfanyl-L-cysteinyl-[protein] + uridine(34) in tRNA + AH2 + ATP = 2-thiouridine(34) in tRNA + L-cysteinyl-[protein] + A + AMP + diphosphate + H(+). Its function is as follows. Catalyzes the 2-thiolation of uridine at the wobble position (U34) of tRNA, leading to the formation of s(2)U34. The sequence is that of tRNA-specific 2-thiouridylase MnmA from Burkholderia lata (strain ATCC 17760 / DSM 23089 / LMG 22485 / NCIMB 9086 / R18194 / 383).